Reading from the N-terminus, the 405-residue chain is L-carnitine CoA-transferase (405 aa).

Residues lysine 97 and arginine 104 each contribute to the CoA site. Catalysis depends on aspartate 169, which acts as the Nucleophile.

It belongs to the CoA-transferase III family. CaiB subfamily. In terms of assembly, homodimer.

The protein resides in the cytoplasm. It catalyses the reaction crotonobetainyl-CoA + (R)-carnitine = crotonobetaine + (R)-carnitinyl-CoA. It carries out the reaction 4-(trimethylamino)butanoyl-CoA + (R)-carnitine = (R)-carnitinyl-CoA + 4-(trimethylamino)butanoate. It participates in amine and polyamine metabolism; carnitine metabolism. Catalyzes the reversible transfer of the CoA moiety from gamma-butyrobetainyl-CoA to L-carnitine to generate L-carnitinyl-CoA and gamma-butyrobetaine. Is also able to catalyze the reversible transfer of the CoA moiety from gamma-butyrobetainyl-CoA or L-carnitinyl-CoA to crotonobetaine to generate crotonobetainyl-CoA. The polypeptide is L-carnitine CoA-transferase (Escherichia coli O7:K1 (strain IAI39 / ExPEC)).